Here is a 206-residue protein sequence, read N- to C-terminus: Guanylate kinase (206 aa).

Residues phenylalanine 5–lysine 183 enclose the Guanylate kinase-like domain. Glycine 12–serine 19 serves as a coordination point for ATP.

It belongs to the guanylate kinase family.

Its subcellular location is the cytoplasm. The enzyme catalyses GMP + ATP = GDP + ADP. Its function is as follows. Essential for recycling GMP and indirectly, cGMP. In Helicobacter pylori (strain J99 / ATCC 700824) (Campylobacter pylori J99), this protein is Guanylate kinase (gmk).